We begin with the raw amino-acid sequence, 717 residues long: Patatin-like phospholipase domain-containing protein AO090003000839 (717 aa).

A helical transmembrane segment spans residues 87–107 (WPFLFIVFGWITVLGFAYALT). Positions 277-468 (LCLSGGATFA…RTDIPIRALN (192 aa)) constitute a PNPLA domain. The GXSXG motif lies at 308–312 (GTSGG). Catalysis depends on Ser-310, which acts as the Nucleophile. Asp-455 serves as the catalytic Proton acceptor. The segment at 620-696 (VSPAQSRRKR…STGNIFQEMR (77 aa)) is disordered. Over residues 639 to 658 (MVERLDHNLPDRQPDNKEDL) the composition is skewed to basic and acidic residues. The segment covering 660 to 673 (DSSGIDSNVSSRDS) has biased composition (low complexity).

Belongs to the PLPL family.

The protein localises to the membrane. Its function is as follows. Probable lipid hydrolase. This Aspergillus oryzae (strain ATCC 42149 / RIB 40) (Yellow koji mold) protein is Patatin-like phospholipase domain-containing protein AO090003000839.